The primary structure comprises 451 residues: Tubulin alpha-2 chain (451 aa).

A GTP-binding site is contributed by Q11. K40 is modified (N6-acetyllysine). GTP is bound by residues E71, G144, T145, T179, N206, and N228. E71 contacts Mg(2+). E254 is a catalytic residue.

Belongs to the tubulin family. Dimer of alpha and beta chains. A typical microtubule is a hollow water-filled tube with an outer diameter of 25 nm and an inner diameter of 15 nM. Alpha-beta heterodimers associate head-to-tail to form protofilaments running lengthwise along the microtubule wall with the beta-tubulin subunit facing the microtubule plus end conferring a structural polarity. Microtubules usually have 13 protofilaments but different protofilament numbers can be found in some organisms and specialized cells. It depends on Mg(2+) as a cofactor. Post-translationally, undergoes a tyrosination/detyrosination cycle, the cyclic removal and re-addition of a C-terminal tyrosine residue by the enzymes tubulin tyrosine carboxypeptidase (TTCP) and tubulin tyrosine ligase (TTL), respectively. Acetylation of alpha chains at Lys-40 stabilizes microtubules and affects affinity and processivity of microtubule motors. This modification has a role in multiple cellular functions, ranging from cell motility, cell cycle progression or cell differentiation to intracellular trafficking and signaling.

Its subcellular location is the cytoplasm. It localises to the cytoskeleton. It catalyses the reaction GTP + H2O = GDP + phosphate + H(+). In terms of biological role, tubulin is the major constituent of microtubules, a cylinder consisting of laterally associated linear protofilaments composed of alpha- and beta-tubulin heterodimers. Microtubules grow by the addition of GTP-tubulin dimers to the microtubule end, where a stabilizing cap forms. Below the cap, tubulin dimers are in GDP-bound state, owing to GTPase activity of alpha-tubulin. The polypeptide is Tubulin alpha-2 chain (TUBA2) (Hordeum vulgare (Barley)).